The sequence spans 351 residues: Histidine protein kinase SaeS (351 aa).

2 consecutive transmembrane segments (helical) span residues 9 to 29 (IIIG…IAYI) and 40 to 60 (TLTL…SIFI). Residues 61-114 (NPLIQKIKQFNIKTKQFANGNYASNDKTFNSPKEIYELNQSFNKMASEITQQMN) form the HAMP domain. The region spanning 129–348 (NLAHDLKTPL…TMTVTLHKLD (220 aa)) is the Histidine kinase domain. Residue H132 is modified to Phosphohistidine; by autocatalysis.

Post-translationally, autophosphorylated.

The protein resides in the cell membrane. It carries out the reaction ATP + protein L-histidine = ADP + protein N-phospho-L-histidine.. In terms of biological role, member of the two-component regulatory system SaeR/SaeS involved in the regulation of staphylococcal virulence factors in a strain-dependent fashion. Probably functions as a membrane-associated protein kinase that upon sensing the appropriate signal, autophosphorylates and in turn activates the cytosolic response regulator SaeR. SaeR/SaeS activates the expression of exoproteins involved in adhesion and invasion of host cells, including hemolysins (hla, hlb, hlgC), coa, DNase, spa and cell wall-associated proteins (emp, eap, fnbA, fnbB, efb). Represses the expression of type 5 capsular polysaccharide (cap operon). Also modulates the expression of several other genes. In Staphylococcus aureus (strain Newman), this protein is Histidine protein kinase SaeS (saeS).